The chain runs to 324 residues: Acetyl-coenzyme A carboxylase carboxyl transferase subunit beta (324 aa).

Residues 1–16 show a composition bias toward low complexity; that stretch reads MTKNNNDLSNSSSNPP. Residues 1 to 51 are disordered; it reads MTKNNNDLSNSSSNPPSNRPVAGKEAELEIQRETHAAQSGQSESWLSRPIP. The span at 22-35 shows a compositional bias: basic and acidic residues; the sequence is AGKEAELEIQRETH. A compositionally biased stretch (polar residues) spans 36–45; that stretch reads AAQSGQSESW. Positions 68–324 constitute a CoA carboxyltransferase N-terminal domain; it reads PSTECPQCHS…YRLLAKLTHV (257 aa). 4 residues coordinate Zn(2+): Cys72, Cys75, Cys91, and Cys94. The C4-type zinc-finger motif lies at 72–94; it reads CPQCHSMITNTALIFNAYVCPHC.

It belongs to the AccD/PCCB family. As to quaternary structure, acetyl-CoA carboxylase is a heterohexamer composed of biotin carboxyl carrier protein (AccB), biotin carboxylase (AccC) and two subunits each of ACCase subunit alpha (AccA) and ACCase subunit beta (AccD). It depends on Zn(2+) as a cofactor.

It localises to the cytoplasm. It carries out the reaction N(6)-carboxybiotinyl-L-lysyl-[protein] + acetyl-CoA = N(6)-biotinyl-L-lysyl-[protein] + malonyl-CoA. It participates in lipid metabolism; malonyl-CoA biosynthesis; malonyl-CoA from acetyl-CoA: step 1/1. Component of the acetyl coenzyme A carboxylase (ACC) complex. Biotin carboxylase (BC) catalyzes the carboxylation of biotin on its carrier protein (BCCP) and then the CO(2) group is transferred by the transcarboxylase to acetyl-CoA to form malonyl-CoA. The protein is Acetyl-coenzyme A carboxylase carboxyl transferase subunit beta of Psychrobacter sp. (strain PRwf-1).